Here is a 146-residue protein sequence, read N- to C-terminus: Hemoglobin subunit beta-1 (146 aa).

Residues 2–146 (HWTAEEKALI…VAHALARRYH (145 aa)) form the Globin domain. His92 serves as a coordination point for heme b.

It belongs to the globin family. Heterotetramer of two alpha chains and two beta chains. As to expression, red blood cells.

Its function is as follows. Involved in oxygen transport from the lung to the various peripheral tissues. This is Hemoglobin subunit beta-1 from Saara hardwickii (Indian spiny-tailed lizard).